The following is a 382-amino-acid chain: Cytochrome b (382 aa).

Transmembrane regions (helical) follow at residues 28–48 (YGFL…FLAS), 72–94 (WCFR…LHIL), 107–127 (SWIS…IGYV), and 169–189 (FFVL…IHIF). Histidine 78 and histidine 92 together coordinate heme b. Residues histidine 173 and histidine 187 each contribute to the heme b site. Histidine 192 is an a ubiquinone binding site. 4 helical membrane passes run 214 to 234 (LLSL…LQSI), 274 to 294 (IPSK…LFLL), 317 to 337 (VPMI…CQLP), and 340 to 360 (IFIL…LFAL).

Belongs to the cytochrome b family. As to quaternary structure, the main subunits of complex b-c1 are: cytochrome b, cytochrome c1 and the Rieske protein. Heme b is required as a cofactor.

The protein resides in the mitochondrion inner membrane. Functionally, component of the ubiquinol-cytochrome c reductase complex (complex III or cytochrome b-c1 complex) that is part of the mitochondrial respiratory chain. The b-c1 complex mediates electron transfer from ubiquinol to cytochrome c. Contributes to the generation of a proton gradient across the mitochondrial membrane that is then used for ATP synthesis. The polypeptide is Cytochrome b (MT-CYB) (Plasmodium vivax (strain Salvador I)).